The following is an 878-amino-acid chain: Probable glucan endo-1,3-beta-glucosidase ARB_02077 (878 aa).

The signal sequence occupies residues 1 to 27 (MARGLVSSLLLGQLLLVLVGLFSPAGA). N-linked (GlcNAc...) asparagine glycosylation is found at Asn-228, Asn-257, Asn-290, and Asn-297. Residues 373-472 (AGSGSKAKRL…TACPSAPVTK (100 aa)) are disordered. The span at 400 to 416 (APAPQPPAQSTAPPYPI) shows a compositional bias: pro residues. Low complexity predominate over residues 433 to 452 (VPTRVPTGGVPSGTTGTAPS). Residues Asn-505, Asn-659, Asn-795, and Asn-862 are each glycosylated (N-linked (GlcNAc...) asparagine).

The protein belongs to the glycosyl hydrolase 55 family.

It is found in the secreted. The enzyme catalyses Hydrolysis of (1-&gt;3)-beta-D-glucosidic linkages in (1-&gt;3)-beta-D-glucans.. Probable glucan endo-1,3-beta-glucosidase involved in the hydrolysis of fungal cell wall. Classified as a small-oligosaccharide-producing type based its the end products: glucose, laminaribiose or laminaritetraose. This is Probable glucan endo-1,3-beta-glucosidase ARB_02077 from Arthroderma benhamiae (strain ATCC MYA-4681 / CBS 112371) (Trichophyton mentagrophytes).